We begin with the raw amino-acid sequence, 77 residues long: Protein RADIALIS-like 4 (77 aa).

The SANT domain maps to 6–61 (MSTSSWTAREDKQFEMALAKFDKDTPDRWQKIARAVGGKSTEEVKRHYELLLRDVN).

Expressed just outside the vascular bundles in the rosette stem and the leaf traces. Not detected in floral primordia.

It localises to the nucleus. Functionally, probable transcription factor. This chain is Protein RADIALIS-like 4 (RL4), found in Arabidopsis thaliana (Mouse-ear cress).